We begin with the raw amino-acid sequence, 1009 residues long: Translation initiation factor IF-2 (1009 aa).

The segment at 1–415 (MSDENENGRP…EREKEKRRGG (415 aa)) is disordered. A compositionally biased stretch (basic and acidic residues) spans 94-110 (EELRARQRVVDAAREAQ). A compositionally biased stretch (low complexity) spans 111–121 (ARQVAEQAAAE). The span at 122-136 (ARARAAQEAAQREAA) shows a compositional bias: basic and acidic residues. Positions 137–146 (AKAAAERAAA) are enriched in low complexity. Over residues 147–174 (APPPVAQAPAAPAPAAPVTPPPAAPQAP) the composition is skewed to pro residues. Over residues 175-189 (RPVAQAPVAPSAPRQ) the composition is skewed to low complexity. Composition is skewed to basic and acidic residues over residues 208–218 (EPSRDRRDDRP) and 251–287 (PRPEGDRPRGPRPDGDRPQGDRGGYRGDRPQGDRPQG). A compositionally biased stretch (pro residues) spans 311 to 320 (GGPPRGPRPG). Basic and acidic residues-rich tracts occupy residues 346 to 358 (MDRRPDEDDDRRK) and 403 to 415 (RAREREKEKRRGG). The region spanning 505-675 (LRPPVVTIMG…LLQAEVLDLK (171 aa)) is the tr-type G domain. Residues 514 to 521 (GHVDHGKT) form a G1 region. GTP is bound at residue 514-521 (GHVDHGKT). The interval 539–543 (GITQH) is G2. Residues 561–564 (DTPG) form a G3 region. GTP-binding positions include 561 to 565 (DTPGH) and 615 to 618 (NKMD). A G4 region spans residues 615–618 (NKMD). Residues 651–653 (SAK) form a G5 region.

This sequence belongs to the TRAFAC class translation factor GTPase superfamily. Classic translation factor GTPase family. IF-2 subfamily.

It localises to the cytoplasm. Functionally, one of the essential components for the initiation of protein synthesis. Protects formylmethionyl-tRNA from spontaneous hydrolysis and promotes its binding to the 30S ribosomal subunits. Also involved in the hydrolysis of GTP during the formation of the 70S ribosomal complex. The chain is Translation initiation factor IF-2 from Caulobacter vibrioides (strain ATCC 19089 / CIP 103742 / CB 15) (Caulobacter crescentus).